The following is a 271-amino-acid chain: Putative pyruvate, phosphate dikinase regulatory protein 1 (271 aa).

156–163 is an ADP binding site; it reads GVSRTSKT.

The protein belongs to the pyruvate, phosphate/water dikinase regulatory protein family. PDRP subfamily.

The enzyme catalyses N(tele)-phospho-L-histidyl/L-threonyl-[pyruvate, phosphate dikinase] + ADP = N(tele)-phospho-L-histidyl/O-phospho-L-threonyl-[pyruvate, phosphate dikinase] + AMP + H(+). The catalysed reaction is N(tele)-phospho-L-histidyl/O-phospho-L-threonyl-[pyruvate, phosphate dikinase] + phosphate + H(+) = N(tele)-phospho-L-histidyl/L-threonyl-[pyruvate, phosphate dikinase] + diphosphate. Functionally, bifunctional serine/threonine kinase and phosphorylase involved in the regulation of the pyruvate, phosphate dikinase (PPDK) by catalyzing its phosphorylation/dephosphorylation. In Staphylococcus saprophyticus subsp. saprophyticus (strain ATCC 15305 / DSM 20229 / NCIMB 8711 / NCTC 7292 / S-41), this protein is Putative pyruvate, phosphate dikinase regulatory protein 1.